A 499-amino-acid chain; its full sequence is Glycerol kinase (499 aa).

Threonine 17 contacts ADP. Residues threonine 17, threonine 18, and serine 19 each contribute to the ATP site. Threonine 17 provides a ligand contact to sn-glycerol 3-phosphate. ADP is bound at residue arginine 21. Sn-glycerol 3-phosphate is bound by residues arginine 87, glutamate 88, tyrosine 139, and aspartate 243. The glycerol site is built by arginine 87, glutamate 88, tyrosine 139, aspartate 243, and glutamine 244. ADP contacts are provided by threonine 265 and glycine 308. The ATP site is built by threonine 265, glycine 308, glutamine 312, and glycine 409. Residues glycine 409 and asparagine 413 each contribute to the ADP site.

It belongs to the FGGY kinase family.

The catalysed reaction is glycerol + ATP = sn-glycerol 3-phosphate + ADP + H(+). The protein operates within polyol metabolism; glycerol degradation via glycerol kinase pathway; sn-glycerol 3-phosphate from glycerol: step 1/1. Its activity is regulated as follows. Inhibited by fructose 1,6-bisphosphate (FBP). Its function is as follows. Key enzyme in the regulation of glycerol uptake and metabolism. Catalyzes the phosphorylation of glycerol to yield sn-glycerol 3-phosphate. This chain is Glycerol kinase, found in Pseudomonas putida (strain GB-1).